The following is a 1160-amino-acid chain: Nonribosomal peptide synthetase fmqC (1160 aa).

Positions 132 to 520 (TYRELNDRSS…LGEVEHALQQ (389 aa)) are adenylation. Positions 642–719 (QPVTQLEESL…EMAGMLDGVT (78 aa)) constitute a Carrier domain. Ser-679 is modified (O-(pantetheine 4'-phosphoryl)serine). The condensation stretch occupies residues 749–1025 (CTLEDLQEGF…CAAAETPMRI (277 aa)).

This sequence belongs to the NRP synthetase family. In terms of assembly, interacts with the mitogen-activated protein kinase mpkA. Phosphorylated by mpkA during conidiogenesis.

Its subcellular location is the cytoplasm. It participates in alkaloid biosynthesis. Functionally, nonribosomal peptide synthetase; part of the gene cluster that mediates the biosynthesis of the antitumor fumiquinazolines that confer a dual-usage capability to defend against phagocytes in the environment and animal hosts. The simplest member is fumiquinazoline F (FQF) with a 6-6-6 tricyclic core derived from anthranilic acid (Ant), tryptophan (Trp), and alanine (Ala). The trimodular NRPS fmqA is responsible for FQF formation. Modules 1, 2 and 3 of fmqA are predicted to activate and load Ant, Trp and Ala, respectively, providing for the assembly of an Ant-Trp-Ala-S-enzyme intermediate that would undergo double cyclization for chain release and generation of the tricyclic 6-6-6 product fumiquinazoline F. The presence of an E domain predicted for module 2 of fmqA is consistent with epimerization of L-Trp to D-Trp during assembly to generate the R-stereocenter at C14 of FQF. The FAD-dependent monooxygenase fmqB and the monomodular NRPS fmqC then maturate FQF to FQA. FmqB oxidizes the 2',3'-double bond of the indole side chain of FQF, and fmqC activates L-Ala as the adenylate, installs it as the pantetheinyl thioester on its carrier protein domain, and acylates the oxidized indole for subsequent intramolecular cyclization to create the 6-5-5-imidazolindolone of FQA. The FAD-linked oxidoreductase fmqD introduces a third layer of scaffold complexity by converting FQA to the spirohemiaminal FQC, presumably by catalyzing the formation of a transient imine within the pyrazinone ring. FQC subsequently converts nonenzymatically to the known cyclic aminal FQD. The polypeptide is Nonribosomal peptide synthetase fmqC (Aspergillus fumigatus (strain ATCC MYA-4609 / CBS 101355 / FGSC A1100 / Af293) (Neosartorya fumigata)).